Consider the following 279-residue polypeptide: Energy-coupling factor transporter ATP-binding protein EcfA1 (279 aa).

Residues 5–240 (IELKKVTFNY…GDELLQLGLD (236 aa)) enclose the ABC transporter domain. Position 40-47 (40-47 (GHNGSGKS)) interacts with ATP.

Belongs to the ABC transporter superfamily. Energy-coupling factor EcfA family. Forms a stable energy-coupling factor (ECF) transporter complex composed of 2 membrane-embedded substrate-binding proteins (S component), 2 ATP-binding proteins (A component) and 2 transmembrane proteins (T component).

Its subcellular location is the cell membrane. Its function is as follows. ATP-binding (A) component of a common energy-coupling factor (ECF) ABC-transporter complex. Unlike classic ABC transporters this ECF transporter provides the energy necessary to transport a number of different substrates. This is Energy-coupling factor transporter ATP-binding protein EcfA1 from Streptococcus pyogenes serotype M12 (strain MGAS2096).